We begin with the raw amino-acid sequence, 320 residues long: Adhesin MafA 1 (320 aa).

The signal sequence occupies residues 1–18 (MQARLLIPILFSVFILSA). C19 carries N-palmitoyl cysteine lipidation. Residue C19 is the site of S-diacylglycerol cysteine attachment. Residues 288–320 (HMGNSAPSVEADNSHEGYGYSDEAVRRHRQGQP) form a disordered region.

Belongs to the MafA family.

The protein resides in the cell outer membrane. This is Adhesin MafA 1 (mafA1) from Neisseria meningitidis serogroup A / serotype 4A (strain DSM 15465 / Z2491).